A 570-amino-acid polypeptide reads, in one-letter code: MNEKHPGPLVVEGKLTDAERMKLESNYLRGTIAEDLNDGLTGGFKGDNFLLIRFHGMYQQDDRDIRAERAEQKLEPRHAMLLRCRLPGGVITTKQWQAIDKFAGENTIYGSIRLTNRQTFQFHGILKKNVKPVHQMLHSVGLDALATANDMNRNVLCTSNPYESQLHAEAYEWAKKISEHLLPRTRAYAEIWLDQEKVATTDEEPILGQTYLPRKFKTTVVIPPQNDIDLHANDMNFVAIAENGKLVGFNLLVGGGLSIEHGNRKTYARTASEFGYLPLEHTLAVAEAVVTTQRDWGNRTDRKNAKTKYTLERVGVETFKAEVERRAGIKFEPIRPYEFTGRSDRIGWVKGIDDKWHLTLFIENGRILDYPGRPLKTGLLEIAKIHKGDFRITANQNLIIAGVPESEKAKIEKIAKESGLMNAVTPQRENSMACVSFPTCPLAMAEAERFLPSFIDNIDNLMAKHGVSDEHIVMRVTGCPNGCGRAMLAEVGLVGKAPGRYNLHLGGNRIGTRIPRMYKENITEPEILALLDELIGRWAKEREAGEGFGDFTVRAGIIRPVLDPARDLWD.

[4Fe-4S] cluster is bound by residues C434, C440, C479, and C483. Residue C483 coordinates siroheme.

The protein belongs to the nitrite and sulfite reductase 4Fe-4S domain family. In terms of assembly, alpha(8)-beta(8). The alpha component is a flavoprotein, the beta component is a hemoprotein. Siroheme serves as cofactor. Requires [4Fe-4S] cluster as cofactor.

It catalyses the reaction hydrogen sulfide + 3 NADP(+) + 3 H2O = sulfite + 3 NADPH + 4 H(+). It participates in sulfur metabolism; hydrogen sulfide biosynthesis; hydrogen sulfide from sulfite (NADPH route): step 1/1. Its function is as follows. Component of the sulfite reductase complex that catalyzes the 6-electron reduction of sulfite to sulfide. This is one of several activities required for the biosynthesis of L-cysteine from sulfate. This chain is Sulfite reductase [NADPH] hemoprotein beta-component, found in Escherichia coli O7:K1 (strain IAI39 / ExPEC).